A 2871-amino-acid polypeptide reads, in one-letter code: Fibrillin-1 (2871 aa).

Positions 1–24 (MRRGGLLEVALGFTVLLASYTSHG) are cleaved as a signal peptide. The propeptide occupies 25–44 (ADTNLEAGNVKETRANRAKR). The segment at 45 to 81 (RGGGGHDALKGPNVCGSRYNAYCCPGWKTLPGGNQCI) is fibrillin unique N-terminal (FUN) domain. The segment at 45-450 (RGGGGHDALK…PPRVLPVNVT (406 aa)) is N-terminal domain. Cystine bridges form between C59-C68, C67-C80, C85-C94, C89-C100, C102-C111, C119-C129, C123-C134, C136-C145, C150-C160, C154-C166, and C168-C177. EGF-like domains follow at residues 81 to 112 (IVPI…PSCG), 115 to 146 (SIQH…THCG), and 147 to 178 (QPVC…PQCE). The interaction with MFAP4 stretch occupies residues 119 to 329 (CNIRCMNGGS…YTSPDGTRCI (211 aa)). The TB 1 domain occupies 184 to 236 (GPCFTVISNQMCQGQLSGIVCTKTLCCATVGRAWGHPCEMCPAQPHPCRRGFI). The interval 195–221 (CQGQLSGIVCTKTLCCATVGRAWGHPC) is hybrid domain 1. Residues 246–287 (DVDECQAIPGLCQGGNCINTVGSFECKCPAGHKFNEVSQKCE) form the EGF-like 4; calcium-binding domain. Disulfide bonds link C250/C262, C257/C271, C273/C286, C292/C304, C299/C313, and C315/C328. The O-linked (Glc) serine glycan is linked to S268. In terms of domain architecture, EGF-like 5; calcium-binding spans 288 to 329 (DIDECSTIPGICDGGECTNTVSSYFCKCPPGFYTSPDGTRCI). Residues 334–389 (GYCYTALANGRCSNQLPQSITKMQCCCDVGRCWSPGVTVAPEMCPIRATEDFNKLC) enclose the TB 2 domain. N-linked (GlcNAc...) asparagine glycosylation occurs at N448. The EGF-like 6 domain occupies 449 to 489 (VTDYCQLFRYLCQNGRCIPTPGSYRCECNKGFQLDLRGECI). Cystine bridges form between C453–C465, C460–C474, C476–C488, C494–C504, C499–C513, C515–C528, C534–C546, C541–C555, C557–C570, C576–C587, C582–C596, C598–C611, C617–C628, C623–C637, and C639–C652. O-linked (Glc) serine glycosylation is present at S471. Residues 490–529 (DVDECEKNPCAGGECINTQGSYTCQCRPGYQSTLTRTECR) enclose the EGF-like 7; calcium-binding domain. An O-linked (Glc) serine glycan is attached at S510. In terms of domain architecture, EGF-like 8; calcium-binding spans 530 to 571 (DIDECLQNGRICNNGRCINTDGSFHCVCNAGFHVTRDGKNCE). One can recognise an EGF-like 9; calcium-binding domain in the interval 572–612 (DMDECSIRNMCLNGMCINEDGSFKCICKPGFQLASDGRYCK). The EGF-like 10; calcium-binding domain occupies 613–653 (DINECETPGICMNGRCVNTDGSYRCECFPGLAVGLDGRVCV). Positions 659-711 (STCYGGYKRGQCVKPLFGAVTKSECCCASTEYAFGEPCQPCPSQNSAEYQALC) constitute a TB 3 domain. The 42-residue stretch at 723-764 (DINECALDPDICPNGICENLRGTYKCICNSGYEVDSTGKNCV) folds into the EGF-like 11; calcium-binding domain. Intrachain disulfides connect C727/C739, C734/C748, C750/C763, C769/C781, C776/C790, C792/C805, C811/C821, C816/C830, C832/C845, C853/C875, C862/C887, C876/C890, C896/C908, C914/C926, C921/C935, and C937/C950. The EGF-like 12; calcium-binding domain occupies 765–806 (DINECVLNSLLCDNGQCRNTPGSFVCTCPKGFIYKPELKTCE). In terms of domain architecture, EGF-like 13; calcium-binding spans 807–846 (DIDECESSPCINGVCKNSPGSFICECSSESTLDPTKTICI). One can recognise a TB 4 domain in the interval 851–902 (GTCWQTVIDGRCEININGATLKSQCCSSLGAAWGSPCTPCQVDPICGKGYSR). The tract at residues 862–887 (CEININGATLKSQCCSSLGAAWGSPC) is hybrid domain 2. Residues 910–951 (DIDECEVFPGVCKNGLCVNSKGSFKCQCPSGMTLDATGRICL) form the EGF-like 14; calcium-binding domain. In terms of domain architecture, TB 5 spans 956–1008 (ETCFLRYEDEECTLPVAGRHRMDACCCSVGAAWGTEECEECPVRNTPEYEELC). The EGF-like 15; calcium-binding domain occupies 1028–1069 (DINECKMIPNLCTHGKCRNTIGSFKCRCDSGFALDSEERNCT). Intrachain disulfides connect C1032-C1044, C1039-C1053, C1055-C1068, C1074-C1086, C1081-C1095, C1097-C1111, C1117-C1129, C1124-C1138, C1140-C1153, C1159-C1171, C1166-C1180, C1182-C1195, C1201-C1212, C1208-C1221, C1223-C1236, C1242-C1254, C1249-C1263, C1265-C1278, C1284-C1296, C1291-C1305, C1307-C1320, C1326-C1339, C1333-C1348, C1350-C1361, C1367-C1380, C1374-C1389, C1391-C1402, C1408-C1420, C1415-C1429, C1431-C1444, C1450-C1461, C1456-C1470, C1472-C1485, C1491-C1502, C1497-C1511, C1513-C1526, C1534-C1562, C1549-C1574, C1563-C1577, C1564-C1589, C1610-C1622, C1617-C1631, C1633-C1646, C1652-C1663, C1658-C1672, and C1674-C1687. An N-linked (GlcNAc...) asparagine glycan is attached at N1067. Residues 1070–1112 (DIDECRISPDLCGRGQCVNTPGDFECKCDEGYESGFMMMKNCM) form the EGF-like 16; calcium-binding domain. Residues 1113-1154 (DIDECQRDPLLCRGGVCLNTEGSYRCECPPGHQLAPNISACI) enclose the EGF-like 17; calcium-binding domain. Residue S1135 is glycosylated (O-linked (Glc) serine). Residue N1149 is glycosylated (N-linked (GlcNAc...) asparagine). One can recognise an EGF-like 18; calcium-binding domain in the interval 1155–1196 (DINECELSAHLCPHGRCVNLIGKYQCACNPGYHSTPDRLFCV). One can recognise an EGF-like 19; calcium-binding domain in the interval 1197 to 1237 (DIDECSIMNGGCETFCTNSEGSYECSCQPGFALMPDQRSCT). The O-linked (Glc) serine glycan is linked to S1218. The 42-residue stretch at 1238–1279 (DIDECEDNPNICDGGQCTNIPGEYRCLCYDGFMASEDMKTCV) folds into the EGF-like 20; calcium-binding domain. One can recognise an EGF-like 21; calcium-binding domain in the interval 1280–1321 (DVNECDLNPNICLSGTCENTKGSFICHCDMGYSGKKGKTGCT). O-linked (Glc) serine glycosylation is present at S1302. One can recognise an EGF-like 22; calcium-binding domain in the interval 1322–1362 (DINECEIGAHNCDRHAVCTNTAGSFKCSCSPGWIGDGIKCT). The O-linked (Glc) serine glycan is linked to S1345. In terms of domain architecture, EGF-like 23; calcium-binding spans 1363–1403 (DLDECSNGTHMCSQHADCKNTMGSYRCLCKEGYTGDGFTCT). A glycan (N-linked (GlcNAc...) asparagine) is linked at N1369. S1386 carries O-linked (Glc) serine glycosylation. Residues 1404–1445 (DLDECSENLNLCGNGQCLNAPGGYRCECDMGFVPSADGKACE) enclose the EGF-like 24; calcium-binding domain. The 41-residue stretch at 1446 to 1486 (DIDECSLPNICVFGTCHNLPGLFRCECEIGYELDRSGGNCT) folds into the EGF-like 25; calcium-binding domain. N1484 carries an N-linked (GlcNAc...) asparagine glycan. The EGF-like 26; calcium-binding domain maps to 1487–1527 (DVNECLDPTTCISGNCVNTPGSYTCDCPPDFELNPTRVGCV). A glycan (O-linked (Glc) serine) is linked at S1508. The C-terminal domain stretch occupies residues 1528 to 2731 (DTRSGNCYLD…GYPKRGRKRR (1204 aa)). Residues 1532-1589 (GNCYLDIRPRGDNGDTACSNEIGVGVSKASCCCSLGKAWGTPCELCPPVNTSEYKILC) enclose the TB 6 domain. The short motif at 1541 to 1543 (RGD) is the Cell attachment site element. N1581 carries N-linked (GlcNAc...) asparagine glycosylation. The EGF-like 27; calcium-binding domain occupies 1606–1647 (DIDECQELPGLCQGGKCINTFGSFQCRCPTGYYLNEDTRVCD). The O-linked (Glc) serine glycan is linked to S1628. The region spanning 1648–1688 (DVNECETPGICGPGTCYNTVGNYTCICPPDYMQVNGGNNCM) is the EGF-like 28; calcium-binding domain. Residue N1669 is glycosylated (N-linked (GlcNAc...) asparagine). The region spanning 1693 to 1748 (SLCYRNYYADNQTCDGELLFNMTKKMCCCSYNIGRAWNKPCEQCPIPSTDEFATLC) is the TB 7 domain. N1703 and N1713 each carry an N-linked (GlcNAc...) asparagine glycan. The 42-residue stretch at 1766 to 1807 (DIDECREIPGVCENGVCINMVGSFRCECPVGFFYNDKLLVCE) folds into the EGF-like 29; calcium-binding domain. Disulfide bonds link C1770–C1782, C1777–C1791, C1793–C1806, C1812–C1824, C1818–C1833, C1835–C1847, C1853–C1865, C1860–C1874, C1876–C1889, C1895–C1905, C1900–C1914, C1916–C1928, C1934–C1947, C1942–C1956, C1958–C1971, C1977–C1989, C1984–C1998, C2000–C2011, C2017–C2029, C2024–C2038, C2040–C2053, C2061–C2083, C2070–C2096, C2084–C2099, C2085–C2111, C2131–C2142, C2137–C2151, C2153–C2164, C2170–C2181, C2176–C2190, C2192–C2204, C2210–C2221, C2217–C2230, C2232–C2245, C2251–C2265, C2258–C2274, C2276–C2289, C2295–C2307, C2302–C2316, and C2318–C2331. An EGF-like 30; calcium-binding domain is found at 1808–1848 (DIDECQNGPVCQRNAECINTAGSYRCDCKPGYRFTSTGQCN). The O-linked (Glc) serine glycan is linked to S1830. In terms of domain architecture, EGF-like 31; calcium-binding spans 1849–1890 (DRNECQEIPNICSHGQCIDTVGSFYCLCHTGFKTNADQTMCL). O-linked (Glc) serine glycosylation is present at S1871. Residues 1891-1929 (DINECERDACGNGTCRNTIGSFNCRCNHGFILSHNNDCI) form the EGF-like 32; calcium-binding domain. N-linked (GlcNAc...) asparagine glycosylation occurs at N1902. Residue S1911 is glycosylated (O-linked (Glc) serine). An EGF-like 33; calcium-binding domain is found at 1930-1972 (DVDECATGNGNLCRNGQCINTVGSFQCQCNEGYEVAPDGRTCV). A glycan (O-linked (Glc) serine) is linked at S1953. The EGF-like 34; calcium-binding domain maps to 1973-2012 (DINECLLDPRKCAPGTCQNLDGSYRCICPPGYSLQNDKCE). An EGF-like 35; calcium-binding domain is found at 2013–2054 (DIDECVEEPEICALGTCSNTEGSFKCLCPDGFSLSSTGRRCQ). The O-linked (Glc) serine glycan is linked to S2035. In terms of domain architecture, TB 8 spans 2059-2111 (SYCYAKFEGGKCSSPKSRNHSKQECCCALKGEGWGDPCELCPTEPDEAFRQIC). An N-linked (GlcNAc...) asparagine glycan is attached at N2077. The EGF-like 36; calcium-binding domain maps to 2127–2165 (DMDECKEPDVCKHGQCINTDGSYRCECPFGYILQGNECV). O-linked (Glc) serine glycosylation is present at S2148. The region spanning 2166-2205 (DTDECSVGNPCGNGTCKNVIGGFECTCEEGFEPGPMMTCE) is the EGF-like 37; calcium-binding domain. N2178 carries an N-linked (GlcNAc...) asparagine glycan. The EGF-like 38; calcium-binding domain occupies 2206–2246 (DINECAQNPLLCAFRCVNTYGSYECKCPAGYVLREDRRMCK). S2227 carries O-linked (Glc) serine glycosylation. An EGF-like 39; calcium-binding domain is found at 2247–2290 (DEDECEEGKHDCAEKQMECKNLIGTYLCICGPGYQRRPDGEGCV). Residues 2291 to 2332 (DENECQTKPGICENGRCLNTRGSYTCECNDGFTASPNQDECL) form the EGF-like 40; calcium-binding domain. O-linked (Glc) serine glycosylation is present at S2313. Residues 2337–2390 (GYCFTEVLQNMCQIGSSNRNPVTKSECCCDGGRGWGPHCEICPFQGTVAFKKLC) form the TB 9 domain. An EGF-like 41; calcium-binding domain is found at 2402–2443 (DIDECKVIHDVCRNGECVNDRGSYHCICKTGYTPDITGTACV). 21 disulfide bridges follow: C2406-C2418, C2413-C2427, C2429-C2442, C2448-C2459, C2455-C2468, C2470-C2483, C2489-C2500, C2496-C2509, C2511-C2522, C2528-C2541, C2535-C2550, C2552-C2565, C2571-C2581, C2577-C2590, C2592-C2605, C2611-C2622, C2617-C2631, C2633-C2646, C2652-C2663, C2659-C2672, and C2674-C2686. The region spanning 2444-2484 (DLNECNQAPKPCNFICKNTEGSYQCSCPKGYILQEDGRSCK) is the EGF-like 42; calcium-binding domain. A glycan (O-linked (Glc) serine) is linked at S2465. An EGF-like 43; calcium-binding domain is found at 2485-2523 (DLDECATKQHNCQFLCVNTIGSFTCKCPPGFTQHHTACI). An EGF-like 44; calcium-binding domain is found at 2524 to 2566 (DNNECTSDINLCGSKGICQNTPGSFTCECQRGFSLDPSGASCE). Residue S2547 is glycosylated (O-linked (Glc) serine). Positions 2567–2606 (DVDECEGNHRCQHGCQNIIGGYRCSCPQGYLQHYQWNQCV) constitute an EGF-like 45; calcium-binding domain. Positions 2607–2647 (DENECLSAHICGGASCHNTLGSYKCMCPAGFQYEQFSGGCQ) constitute an EGF-like 46; calcium-binding domain. O-linked (Glc) serine glycosylation occurs at S2628. Residues 2648–2687 (DINECGSAQAPCSYGCSNTEGGYLCACPPGYFRIGQGHCV) form the EGF-like 47; calcium-binding domain. Phosphoserine is present on residues S2702 and S2709. N-linked (GlcNAc...) asparagine glycosylation is found at N2734, N2750, and N2767.

The protein belongs to the fibrillin family. Interacts with COL16A1. Interacts with integrin alpha-V/beta-3. Interacts with ADAMTS10; this interaction promotes microfibril assembly. Interacts with THSD4; this interaction promotes fibril formation. Interacts (via N-terminal domain) with FBLN2 and FBLN5. Interacts with ELN. Forms a ternary complex with ELN and FBLN2 or FBLN5 and a significant interaction with ELN seen only in the presence of FBLN2 or FBLN5. Interacts (via N-terminal domain) with LTBP2 (via C-terminal domain) in a Ca(+2)-dependent manner. Interacts (via N-terminal domain) with LTBP1 (via C-terminal domain). Interacts with integrins ITGA5:ITGB1, ITGAV:ITGB3 and ITGAV:ITGB6. Interacts (via N-terminal domain) with BMP2, BMP4, BMP7, BMP10 and GDF5. Interacts (via N-terminal domain) with MFAP2 and MFAP5. Interacts with ADAMTSL5. Interacts with MFAP4. Interacts (via N-terminal domain) with TNFSF11 in a Ca(+2)-dependent manner. Interacts (via N-terminal domain) with EFEMP2; this interaction inhibits EFEMP2 binding to LOX and ELN. In terms of processing, cleavage of N- and C-terminus by furin is required for incorporation into the extracellular matrix and assembly into microfibrils. The C-terminus, which corresponds to the Asprosin chain, was initially thought to constitute a propeptide. Fibrillin-1 and Asprosin chains are still linked together during the secretion from cells, but are subsequently separated by furin, an essential step for incorporation of Fibrillin-1 into the nascent microfibrils. Post-translationally, forms intermolecular disulfide bonds either with other fibrillin-1 molecules or with other components of the microfibrils. O-glycosylated on serine residues by POGLUT2 and POGLUT3 which is necessary for efficient protein secretion.

The protein resides in the secreted. The protein localises to the extracellular space. Its subcellular location is the extracellular matrix. Structural component of the 10-12 nm diameter microfibrils of the extracellular matrix, which conveys both structural and regulatory properties to load-bearing connective tissues. Fibrillin-1-containing microfibrils provide long-term force bearing structural support. In tissues such as the lung, blood vessels and skin, microfibrils form the periphery of the elastic fiber, acting as a scaffold for the deposition of elastin. In addition, microfibrils can occur as elastin-independent networks in tissues such as the ciliary zonule, tendon, cornea and glomerulus where they provide tensile strength and have anchoring roles. Fibrillin-1 also plays a key role in tissue homeostasis through specific interactions with growth factors, such as the bone morphogenetic proteins (BMPs), growth and differentiation factors (GDFs) and latent transforming growth factor-beta-binding proteins (LTBPs), cell-surface integrins and other extracellular matrix protein and proteoglycan components. Regulates osteoblast maturation by controlling TGF-beta bioavailability and calibrating TGF-beta and BMP levels, respectively. Negatively regulates osteoclastogenesis by binding and sequestering an osteoclast differentiation and activation factor TNFSF11. This leads to disruption of TNFSF11-induced Ca(2+) signaling and impairment of TNFSF11-mediated nuclear translocation and activation of transcription factor NFATC1 which regulates genes important for osteoclast differentiation and function. Mediates cell adhesion via its binding to cell surface receptors integrins ITGAV:ITGB3 and ITGA5:ITGB1. Binds heparin and this interaction plays an important role in the assembly of microfibrils. In terms of biological role, hormone that targets the liver to increase plasma glucose levels. Secreted by white adipose tissue and circulates in the plasma. Acts in response to fasting and promotes blood glucose elevation by binding to the surface of hepatocytes. Promotes hepatocyte glucose release by activating the protein kinase A activity in the liver, resulting in rapid glucose release into the circulation. The sequence is that of Fibrillin-1 from Bos taurus (Bovine).